Here is a 505-residue protein sequence, read N- to C-terminus: ATP synthase subunit beta (505 aa).

158–165 (GGAGVGKT) serves as a coordination point for ATP.

Belongs to the ATPase alpha/beta chains family. As to quaternary structure, F-type ATPases have 2 components, CF(1) - the catalytic core - and CF(0) - the membrane proton channel. CF(1) has five subunits: alpha(3), beta(3), gamma(1), delta(1), epsilon(1). CF(0) has three main subunits: a(1), b(2) and c(9-12). The alpha and beta chains form an alternating ring which encloses part of the gamma chain. CF(1) is attached to CF(0) by a central stalk formed by the gamma and epsilon chains, while a peripheral stalk is formed by the delta and b chains.

The protein localises to the cell inner membrane. It carries out the reaction ATP + H2O + 4 H(+)(in) = ADP + phosphate + 5 H(+)(out). Functionally, produces ATP from ADP in the presence of a proton gradient across the membrane. The catalytic sites are hosted primarily by the beta subunits. The polypeptide is ATP synthase subunit beta (Parabacteroides distasonis (strain ATCC 8503 / DSM 20701 / CIP 104284 / JCM 5825 / NCTC 11152)).